A 310-amino-acid chain; its full sequence is Porphobilinogen deaminase (310 aa).

The residue at position 242 (C242) is an S-(dipyrrolylmethanemethyl)cysteine.

This sequence belongs to the HMBS family. Monomer. Requires dipyrromethane as cofactor.

It catalyses the reaction 4 porphobilinogen + H2O = hydroxymethylbilane + 4 NH4(+). The protein operates within porphyrin-containing compound metabolism; protoporphyrin-IX biosynthesis; coproporphyrinogen-III from 5-aminolevulinate: step 2/4. Tetrapolymerization of the monopyrrole PBG into the hydroxymethylbilane pre-uroporphyrinogen in several discrete steps. In Shewanella pealeana (strain ATCC 700345 / ANG-SQ1), this protein is Porphobilinogen deaminase.